The chain runs to 829 residues: Spindle-defective protein 2 (829 aa).

Disordered stretches follow at residues 1–29 (MNED…DGES), 41–104 (EDED…SNDI), 183–294 (KKDV…TTSD), and 326–471 (RKKR…NGHM). Basic and acidic residues predominate over residues 54–82 (FRLENRYKPSLHTPRELPTIREENREDVR). Polar residues predominate over residues 83-93 (SNTSSRVNTRP). Residues 183 to 216 (KKDVTRKQENVRPGKMMPEKVNDENEPKSRRFSP) show a composition bias toward basic and acidic residues. 2 stretches are compositionally biased toward polar residues: residues 217–230 (ERNT…NSTK) and 266–294 (PQRT…TTSD). Positions 314 to 332 (VDINLLTALENARKKRDRP) form a coiled coil. Low complexity-rich tracts occupy residues 361–370 (SMTSIVSSST) and 384–408 (NSAT…RVST). Composition is skewed to polar residues over residues 409 to 439 (AKND…NSMT) and 448 to 463 (SVSS…STMT).

The protein localises to the cytoplasm. The protein resides in the cytoskeleton. It is found in the microtubule organizing center. Its subcellular location is the centrosome. It localises to the centriole. In terms of biological role, required both for centrosome duplication and maturation. Required for pericentriolar material (PCM) recruitment. This chain is Spindle-defective protein 2, found in Caenorhabditis briggsae.